A 299-amino-acid polypeptide reads, in one-letter code: Dye-decolorizing peroxidase YfeX (299 aa).

Histidine 215 lines the heme pocket.

The protein belongs to the DyP-type peroxidase family. Heme b serves as cofactor.

It is found in the cytoplasm. In terms of biological role, has both general peroxidase activity and dye-decolorizing activity. Can catalyze the oxidation of 2,2'-azino-bis(3-ethylbenzothiazoline-6-sulphonic acid) (ABTS), and the phenolic compounds guaiacol and catechol. Also decolorizes the anthraquinone dye reactive blue 19 (RB19). The chain is Dye-decolorizing peroxidase YfeX from Escherichia coli O157:H7.